The following is a 250-amino-acid chain: Flavin-dependent thymidylate synthase (250 aa).

Positions 7-233 (LSVELIACSS…PTVFGDFEIE (227 aa)) constitute a ThyX domain. Residues 92–95 (ELVR), 103–107 (QLSQR), and Arg172 contribute to the dUMP site. Residues 95–97 (RHR) and Gln103 contribute to the FAD site. Positions 95–105 (RHRHFSFSQLS) match the ThyX motif motif. Residues 188–190 (NFR) and His194 each bind FAD. Arg199 serves as a coordination point for dUMP. Residue Arg199 is the Involved in ionization of N3 of dUMP, leading to its activation of the active site.

It belongs to the thymidylate synthase ThyX family. Homotetramer. FAD is required as a cofactor.

It catalyses the reaction dUMP + (6R)-5,10-methylene-5,6,7,8-tetrahydrofolate + NADPH + H(+) = dTMP + (6S)-5,6,7,8-tetrahydrofolate + NADP(+). It participates in pyrimidine metabolism; dTTP biosynthesis. Its function is as follows. Catalyzes the reductive methylation of 2'-deoxyuridine-5'-monophosphate (dUMP) to 2'-deoxythymidine-5'-monophosphate (dTMP) while utilizing 5,10-methylenetetrahydrofolate (mTHF) as the methyl donor, and NADPH and FADH(2) as the reductant. The protein is Flavin-dependent thymidylate synthase of Corynebacterium glutamicum (strain ATCC 13032 / DSM 20300 / JCM 1318 / BCRC 11384 / CCUG 27702 / LMG 3730 / NBRC 12168 / NCIMB 10025 / NRRL B-2784 / 534).